A 474-amino-acid chain; its full sequence is tRNA-2-methylthio-N(6)-dimethylallyladenosine synthase (474 aa).

Residues 3–120 (KKLHIKTWGC…LPEMINHVQG (118 aa)) enclose the MTTase N-terminal domain. Positions 12, 49, 83, 157, 161, and 164 each coordinate [4Fe-4S] cluster. The 233-residue stretch at 143–375 (RAEGPTAFVS…QQRISQQAME (233 aa)) folds into the Radical SAM core domain. In terms of domain architecture, TRAM spans 378–441 (RKMVGTVQRV…ASSLRGILLR (64 aa)).

Belongs to the methylthiotransferase family. MiaB subfamily. Monomer. Requires [4Fe-4S] cluster as cofactor.

It is found in the cytoplasm. The enzyme catalyses N(6)-dimethylallyladenosine(37) in tRNA + (sulfur carrier)-SH + AH2 + 2 S-adenosyl-L-methionine = 2-methylsulfanyl-N(6)-dimethylallyladenosine(37) in tRNA + (sulfur carrier)-H + 5'-deoxyadenosine + L-methionine + A + S-adenosyl-L-homocysteine + 2 H(+). Functionally, catalyzes the methylthiolation of N6-(dimethylallyl)adenosine (i(6)A), leading to the formation of 2-methylthio-N6-(dimethylallyl)adenosine (ms(2)i(6)A) at position 37 in tRNAs that read codons beginning with uridine. The chain is tRNA-2-methylthio-N(6)-dimethylallyladenosine synthase from Yersinia pestis bv. Antiqua (strain Angola).